We begin with the raw amino-acid sequence, 278 residues long: HTH-type transcriptional activator RhaS (278 aa).

Positions 174–272 (NQLLAWLEDH…DWSPRDIRQG (99 aa)) constitute an HTH araC/xylS-type domain. 2 DNA-binding regions (H-T-H motif) span residues 191 to 212 (ESIA…KQQT) and 239 to 262 (VTDI…RREF).

Binds DNA as a dimer.

It localises to the cytoplasm. Activates expression of the rhaBAD and rhaT operons. In Citrobacter koseri (strain ATCC BAA-895 / CDC 4225-83 / SGSC4696), this protein is HTH-type transcriptional activator RhaS.